The following is a 449-amino-acid chain: Metacaspase-1 (449 aa).

The segment at 1-132 (MFPGQGRHTY…YSRPPTNQQS (132 aa)) is disordered. The segment covering 10-26 (YGGQQQLLQLQQYNYGP) has biased composition (low complexity). Pro residues predominate over residues 27–55 (PQGPPPNGYGPPPGPPPNGYGPPPGPPPQ). The segment covering 56-66 (NSWGYGNPSGT) has biased composition (polar residues). Low complexity-rich tracts occupy residues 67–91 (QSSN…YQRP) and 98–112 (QSGN…NGEP). The span at 119–132 (GSGQYSRPPTNQQS) shows a compositional bias: polar residues. Active-site residues include His232 and Cys293.

It belongs to the peptidase C14B family.

Functionally, involved in cell death (apoptosis). This Lodderomyces elongisporus (strain ATCC 11503 / CBS 2605 / JCM 1781 / NBRC 1676 / NRRL YB-4239) (Yeast) protein is Metacaspase-1 (MCA1).